The following is a 396-amino-acid chain: Ribosomal RNA large subunit methyltransferase I (396 aa).

In terms of domain architecture, PUA spans 2–79 (AIRIKLKPGR…REEEIDREFF (78 aa)).

This sequence belongs to the methyltransferase superfamily. RlmI family.

It localises to the cytoplasm. It catalyses the reaction cytidine(1962) in 23S rRNA + S-adenosyl-L-methionine = 5-methylcytidine(1962) in 23S rRNA + S-adenosyl-L-homocysteine + H(+). Functionally, specifically methylates the cytosine at position 1962 (m5C1962) of 23S rRNA. This Shewanella oneidensis (strain ATCC 700550 / JCM 31522 / CIP 106686 / LMG 19005 / NCIMB 14063 / MR-1) protein is Ribosomal RNA large subunit methyltransferase I.